The sequence spans 126 residues: Large ribosomal subunit protein bL17 (126 aa).

It belongs to the bacterial ribosomal protein bL17 family. As to quaternary structure, part of the 50S ribosomal subunit. Contacts protein L32.

The protein is Large ribosomal subunit protein bL17 of Vibrio parahaemolyticus serotype O3:K6 (strain RIMD 2210633).